The sequence spans 267 residues: Glutamate racemase (267 aa).

Substrate contacts are provided by residues 13–14 and 45–46; these read DS and YS. The Proton donor/acceptor role is filled by Cys77. 78–79 is a substrate binding site; sequence NT. The active-site Proton donor/acceptor is Cys188. Residue 189 to 190 participates in substrate binding; it reads TH.

Belongs to the aspartate/glutamate racemases family.

It catalyses the reaction L-glutamate = D-glutamate. It functions in the pathway cell wall biogenesis; peptidoglycan biosynthesis. In terms of biological role, provides the (R)-glutamate required for cell wall biosynthesis. In Histophilus somni (strain 2336) (Haemophilus somnus), this protein is Glutamate racemase.